The following is a 296-amino-acid chain: Probable AP endonuclease (296 aa).

A disulfide bridge links Cys-16 with Cys-20. Zn(2+) contacts are provided by His-78, His-115, Glu-142, His-182, His-218, Asp-231, His-233, and Glu-271.

Belongs to the AP endonuclease 2 family. Requires Zn(2+) as cofactor.

The protein resides in the host nucleus. The protein localises to the host cytoplasm. Its subcellular location is the virion. Endonuclease of the viral base excision repair system that catalyzes DNA cleavage reaction at the apurinic or apyrimidinic sites (AP sites). Cleaves phosphodiester bonds on the 5' side of AP sites. In addition to endonuclease activity, the AP endonuclease has a proofreading 3'-5' exonuclease activity that is considerably more efficient in the elimination of a mismatch than in that of a correctly paired base. Displays 3'-phosphatase and 3'-repair diesterase activities. The single nucleotide gaps generated by the AP endonuclease are filled by the viral repair DNA polymerase X and the DNA ligase. The protein is Probable AP endonuclease of Ornithodoros (relapsing fever ticks).